We begin with the raw amino-acid sequence, 194 residues long: Holliday junction branch migration complex subunit RuvA (194 aa).

The interval 1–64 is domain I; the sequence is MISRLTGKLV…EDAHLLFGFA (64 aa). Positions 65–143 are domain II; it reads TAEERKTFRQ…AHTVTDGLFA (79 aa). The flexible linker stretch occupies residues 144 to 147; the sequence is AAPA. The segment at 147 to 194 is domain III; the sequence is AADETEDIVSTLLALGYSEREAKAAVKGVPEGTDVGEGVRLALKNLLK.

The protein belongs to the RuvA family. As to quaternary structure, homotetramer. Forms an RuvA(8)-RuvB(12)-Holliday junction (HJ) complex. HJ DNA is sandwiched between 2 RuvA tetramers; dsDNA enters through RuvA and exits via RuvB. An RuvB hexamer assembles on each DNA strand where it exits the tetramer. Each RuvB hexamer is contacted by two RuvA subunits (via domain III) on 2 adjacent RuvB subunits; this complex drives branch migration. In the full resolvosome a probable DNA-RuvA(4)-RuvB(12)-RuvC(2) complex forms which resolves the HJ.

It localises to the cytoplasm. The RuvA-RuvB-RuvC complex processes Holliday junction (HJ) DNA during genetic recombination and DNA repair, while the RuvA-RuvB complex plays an important role in the rescue of blocked DNA replication forks via replication fork reversal (RFR). RuvA specifically binds to HJ cruciform DNA, conferring on it an open structure. The RuvB hexamer acts as an ATP-dependent pump, pulling dsDNA into and through the RuvAB complex. HJ branch migration allows RuvC to scan DNA until it finds its consensus sequence, where it cleaves and resolves the cruciform DNA. This chain is Holliday junction branch migration complex subunit RuvA, found in Neisseria meningitidis serogroup C (strain 053442).